A 563-amino-acid chain; its full sequence is MTDEGDLAQEDTAKDEGNVTEGSRMSKLRRARRKVTKPHLCSMDGEEIAKANSSEMSRNQIADLSKPGSAESWSSHSAKDAYHPTPVVKPSLPSALAGAPDAEFSPNTDPTRYNAQSFNPPQLSARMKHIKQEMAKNHLQFVRFEATDLHGVSRSKSIPAQFFQEKVIHGVFMPRGYLELMPNPKDNEVNHIRATCFNSDIVLMPELSTFRVLPWAERTARVICDTFTVTGEPLLTSPRYIAKRQLRQLQDAGFCLLSAFIYDFCIFGVPEVINSKTISFPASTLLSNHDQPFMQELVEGLYQTGANVESFSSSTRPGQMEICFLPEFGISSADNAFTLRTGLQEVARRYNYIASLVIETGFCNSGILSHSIWDVGGKTNMFCSGSGVERLTLTGKKWLAGLLKHSAALSCLMAPAVNCRKRYCKDSRDLKDSVPTTWGYNDNSCALNIKCHGEKGTQIENKLGSATANPYLVLAATVAAGLDGLQSSDGAAAGSDESQDLYQPEPSEIPLKMEDALAALEQDECLKQALGETFIRYFVAMKKYELENEETDAEGNKFLEYFI.

The disordered stretch occupies residues 1–115 (MTDEGDLAQE…PNTDPTRYNA (115 aa)). A compositionally biased stretch (basic residues) spans 26–37 (SKLRRARRKVTK). Composition is skewed to polar residues over residues 51 to 62 (ANSSEMSRNQIA) and 105 to 115 (SPNTDPTRYNA). One can recognise a GS beta-grasp domain in the interval 137–231 (NHLQFVRFEA…VICDTFTVTG (95 aa)). The region spanning 238 to 563 (PRYIAKRQLR…EGNKFLEYFI (326 aa)) is the GS catalytic domain.

The protein belongs to the glutamine synthetase family. Dodecamer. Interacts with BFSP2 and VIM. In terms of tissue distribution, expressed in lens.

May act as a component of the cytoskeleton or as a chaperone for the reorganization of intermediate filament proteins during terminal differentiation in the lens. Does not seem to have enzymatic activity. The chain is Lengsin (Lgsn) from Mus musculus (Mouse).